A 364-amino-acid polypeptide reads, in one-letter code: Nicotinate-nucleotide--dimethylbenzimidazole phosphoribosyltransferase (364 aa).

Glu-332 serves as the catalytic Proton acceptor.

Belongs to the CobT family.

It carries out the reaction 5,6-dimethylbenzimidazole + nicotinate beta-D-ribonucleotide = alpha-ribazole 5'-phosphate + nicotinate + H(+). It participates in nucleoside biosynthesis; alpha-ribazole biosynthesis; alpha-ribazole from 5,6-dimethylbenzimidazole: step 1/2. Catalyzes the synthesis of alpha-ribazole-5'-phosphate from nicotinate mononucleotide (NAMN) and 5,6-dimethylbenzimidazole (DMB). The sequence is that of Nicotinate-nucleotide--dimethylbenzimidazole phosphoribosyltransferase from Salinispora tropica (strain ATCC BAA-916 / DSM 44818 / JCM 13857 / NBRC 105044 / CNB-440).